We begin with the raw amino-acid sequence, 127 residues long: Large ribosomal subunit protein uL22 (127 aa).

This sequence belongs to the universal ribosomal protein uL22 family. In terms of assembly, part of the 50S ribosomal subunit.

Functionally, this protein binds specifically to 23S rRNA; its binding is stimulated by other ribosomal proteins, e.g. L4, L17, and L20. It is important during the early stages of 50S assembly. It makes multiple contacts with different domains of the 23S rRNA in the assembled 50S subunit and ribosome. The globular domain of the protein is located near the polypeptide exit tunnel on the outside of the subunit, while an extended beta-hairpin is found that lines the wall of the exit tunnel in the center of the 70S ribosome. This chain is Large ribosomal subunit protein uL22, found in Brucella suis (strain ATCC 23445 / NCTC 10510).